Reading from the N-terminus, the 124-residue chain is Small ribosomal subunit protein uS13 (124 aa).

Positions 95 to 124 (GLPVRGQRTKTNARTRKGPKRTIAGKKKAR) are disordered.

Belongs to the universal ribosomal protein uS13 family. Part of the 30S ribosomal subunit. Forms a loose heterodimer with protein S19. Forms two bridges to the 50S subunit in the 70S ribosome.

Located at the top of the head of the 30S subunit, it contacts several helices of the 16S rRNA. In the 70S ribosome it contacts the 23S rRNA (bridge B1a) and protein L5 of the 50S subunit (bridge B1b), connecting the 2 subunits; these bridges are implicated in subunit movement. Contacts the tRNAs in the A and P-sites. This Mycolicibacterium smegmatis (strain ATCC 700084 / mc(2)155) (Mycobacterium smegmatis) protein is Small ribosomal subunit protein uS13.